Reading from the N-terminus, the 174-residue chain is Shikimate kinase 2 (174 aa).

ATP is bound at residue 12-17; it reads GAGKTT. The Mg(2+) site is built by threonine 16 and aspartate 32. Substrate-binding residues include aspartate 34, arginine 58, and glycine 79. The tract at residues 112–126 is LID domain; it reads AEDPEEAQRPSLTGK. Residue arginine 120 participates in ATP binding. Arginine 139 lines the substrate pocket. Glutamine 155 is an ATP binding site.

This sequence belongs to the shikimate kinase family. AroL subfamily. In terms of assembly, monomer. Mg(2+) is required as a cofactor.

The protein localises to the cytoplasm. The catalysed reaction is shikimate + ATP = 3-phosphoshikimate + ADP + H(+). The protein operates within metabolic intermediate biosynthesis; chorismate biosynthesis; chorismate from D-erythrose 4-phosphate and phosphoenolpyruvate: step 5/7. Catalyzes the specific phosphorylation of the 3-hydroxyl group of shikimic acid using ATP as a cosubstrate. The polypeptide is Shikimate kinase 2 (Yersinia pseudotuberculosis serotype IB (strain PB1/+)).